Reading from the N-terminus, the 322-residue chain is tRNA U34 carboxymethyltransferase (322 aa).

Carboxy-S-adenosyl-L-methionine contacts are provided by residues lysine 90, tryptophan 104, lysine 109, glycine 129, 151–153 (DPS), 180–181 (IE), methionine 196, tyrosine 200, and arginine 315.

The protein belongs to the class I-like SAM-binding methyltransferase superfamily. CmoB family. Homotetramer.

It carries out the reaction carboxy-S-adenosyl-L-methionine + 5-hydroxyuridine(34) in tRNA = 5-carboxymethoxyuridine(34) in tRNA + S-adenosyl-L-homocysteine + H(+). Its function is as follows. Catalyzes carboxymethyl transfer from carboxy-S-adenosyl-L-methionine (Cx-SAM) to 5-hydroxyuridine (ho5U) to form 5-carboxymethoxyuridine (cmo5U) at position 34 in tRNAs. This Cellvibrio japonicus (strain Ueda107) (Pseudomonas fluorescens subsp. cellulosa) protein is tRNA U34 carboxymethyltransferase.